Consider the following 395-residue polypeptide: Phosphoglycerate kinase (395 aa).

Substrate contacts are provided by residues 21–23 (DFN), Arg36, 59–62 (HLGR), Arg120, and Arg153. ATP contacts are provided by residues Lys203, Glu325, and 351–354 (GGDS).

The protein belongs to the phosphoglycerate kinase family. In terms of assembly, monomer.

It localises to the cytoplasm. It carries out the reaction (2R)-3-phosphoglycerate + ATP = (2R)-3-phospho-glyceroyl phosphate + ADP. It functions in the pathway carbohydrate degradation; glycolysis; pyruvate from D-glyceraldehyde 3-phosphate: step 2/5. The polypeptide is Phosphoglycerate kinase (Roseiflexus sp. (strain RS-1)).